Reading from the N-terminus, the 165-residue chain is Cyanate hydratase (165 aa).

Active-site residues include Arg-106, Glu-109, and Ser-132.

The protein belongs to the cyanase family.

The catalysed reaction is cyanate + hydrogencarbonate + 3 H(+) = NH4(+) + 2 CO2. In terms of biological role, catalyzes the reaction of cyanate with bicarbonate to produce ammonia and carbon dioxide. This chain is Cyanate hydratase, found in Laccaria bicolor (strain S238N-H82 / ATCC MYA-4686) (Bicoloured deceiver).